A 173-amino-acid polypeptide reads, in one-letter code: Inorganic pyrophosphatase (173 aa).

Positions 29, 43, and 55 each coordinate substrate. Residues Asp-65, Asp-70, and Asp-102 each contribute to the Mg(2+) site. Tyr-141 provides a ligand contact to substrate.

It belongs to the PPase family. In terms of assembly, homohexamer. Mg(2+) is required as a cofactor.

The protein resides in the cytoplasm. It catalyses the reaction diphosphate + H2O = 2 phosphate + H(+). Catalyzes the hydrolysis of inorganic pyrophosphate (PPi) forming two phosphate ions. The protein is Inorganic pyrophosphatase of Rickettsia felis (strain ATCC VR-1525 / URRWXCal2) (Rickettsia azadi).